The chain runs to 528 residues: Transcription factor cghF (528 aa).

The interval 232 to 283 is disordered; the sequence is TPPNHATSSTPTSTRTPPTYHPHGPRPKSPLSSTPSPRTESTKSAAPSRDLA. Residues 238-249 are compositionally biased toward low complexity; it reads TSSTPTSTRTPP. The segment covering 261–276 has biased composition (polar residues); it reads PLSSTPSPRTESTKSA.

The protein resides in the nucleus. Transcription factor that regulates the expression of the gene cluster that mediates the biosynthesis of the tetramic acid Sch210972, a potential anti-HIV fungal natural product that contains a decalin core. The protein is Transcription factor cghF of Chaetomium globosum (strain ATCC 6205 / CBS 148.51 / DSM 1962 / NBRC 6347 / NRRL 1970) (Soil fungus).